Consider the following 567-residue polypeptide: Thiol:disulfide interchange protein DsbD (567 aa).

Positions 1-19 (MAQRIFTLILLLCSTSAFA) are cleaved as a signal peptide. Disulfide bonds link cysteine 122–cysteine 128 and cysteine 185–cysteine 307. 8 helical membrane passes run 166-186 (LPFSALWALLIGIGIAFTPCV), 210-230 (LLLAFIYVQGMALTYTALGLV), 246-266 (YVLIGLAIVFTLLALSMFGLF), 299-319 (IAGLICSPCTTAPLSAILLYI), 326-346 (WLGGGTLYLYALGMGLPLMLV), 360-380 (WMAHVKTAFGFVILALPVFLL), 387-407 (AWGLRLWSLLGVAFFGWAFIT), and 418-438 (IVQIILLAAALISVRPLQDWA). Positions 435–567 (QDWAFGSPSA…FSAHLHDRQP (133 aa)) constitute a Thioredoxin domain. Cysteine 482 and cysteine 485 are joined by a disulfide.

The protein belongs to the thioredoxin family. DsbD subfamily.

The protein resides in the cell inner membrane. It catalyses the reaction [protein]-dithiol + NAD(+) = [protein]-disulfide + NADH + H(+). It carries out the reaction [protein]-dithiol + NADP(+) = [protein]-disulfide + NADPH + H(+). Functionally, required to facilitate the formation of correct disulfide bonds in some periplasmic proteins and for the assembly of the periplasmic c-type cytochromes. Acts by transferring electrons from cytoplasmic thioredoxin to the periplasm. This transfer involves a cascade of disulfide bond formation and reduction steps. This chain is Thiol:disulfide interchange protein DsbD, found in Salmonella choleraesuis (strain SC-B67).